A 195-amino-acid polypeptide reads, in one-letter code: Transcriptional regulator LdrP (195 aa).

The 73-residue stretch at 110–182 folds into the HTH crp-type domain; it reads GELRARIARY…YRRVYLLDLA (73 aa). Positions 142 to 161 form a DNA-binding region, H-T-H motif; the sequence is HEEIADATASIRESVSKVLA.

Homodimer.

In terms of biological role, activates transcription. Positively regulates PcrtB promoter upstream of the crtB operon in a cAMP-independent manner. Regulated genes include genes encoding DNA photolyase, phytoene synthase and cytochrome P450 monooxygenase, which are involved in carotenoid biosynthesis. Positively regulates the light-inducible gene cluster in the megaplasmid in a cAMP-independent manner. This Thermus thermophilus (strain ATCC 27634 / DSM 579 / HB8) protein is Transcriptional regulator LdrP.